The chain runs to 143 residues: Cytotoxic L-amino-acid oxidase (143 aa).

This sequence belongs to the flavin monoamine oxidase family. The cofactor is FAD.

The catalysed reaction is an L-alpha-amino acid + O2 + H2O = a 2-oxocarboxylate + H2O2 + NH4(+). Its function is as follows. Cytotoxic L-amino acid oxidase with high oxidase activity towards DL-methionine and L-methionine, L-phenylalanine, DL-norleucine, L-isoleucine, L-arginine, L-tyrosine, and DL-leucine. Shows relatively low activity towards DL-lysine and L-lysine, DL-asparagine, DL-valine, L-histidine, DL-threonine, DL-tryptophan, and L-glutamic acid; and no activity towards L-cysteine, L-glycine, L-proline, L-oxyproline, DL-serine, and DL-aspartic acid. Does not use benzylamine, ethanolamine, diethylamine, meta- and para-phenylendiamine, ortho-, meta- and para-aminophenols, or putrescin as a substrate. Acts as a toxin by inducing chromatin condensation, as well as DNA and nucleus fragmentation, which are typical for apoptosis. Probably induces cell damage indirectly via the generation of free radicals and oxidant agents that can trigger cell impairment and apoptosis by a caspase-independent pathway. The sequence is that of Cytotoxic L-amino-acid oxidase from Amanita phalloides (Death cap).